We begin with the raw amino-acid sequence, 366 residues long: Quinolinate synthase (366 aa).

Residues His44 and Ser61 each contribute to the iminosuccinate site. Cys108 is a binding site for [4Fe-4S] cluster. Residues 139 to 141 (YIN) and Ser160 contribute to the iminosuccinate site. Cys228 is a binding site for [4Fe-4S] cluster. Iminosuccinate is bound by residues 254 to 256 (HPE) and Thr271. Cys318 lines the [4Fe-4S] cluster pocket.

This sequence belongs to the quinolinate synthase family. Type 3 subfamily. It depends on [4Fe-4S] cluster as a cofactor.

The protein resides in the cytoplasm. The enzyme catalyses iminosuccinate + dihydroxyacetone phosphate = quinolinate + phosphate + 2 H2O + H(+). It functions in the pathway cofactor biosynthesis; NAD(+) biosynthesis; quinolinate from iminoaspartate: step 1/1. Its function is as follows. Catalyzes the condensation of iminoaspartate with dihydroxyacetone phosphate to form quinolinate. This is Quinolinate synthase from Listeria innocua serovar 6a (strain ATCC BAA-680 / CLIP 11262).